An 81-amino-acid chain; its full sequence is Putative CNGA1-overlapping antisense gene protein (81 aa).

Expressed in brain, notably in regions involved in long-term potentiation and long-term depression, such as hippocampal CA1 and CA3, dentate gyrus and cerebellar Purkinje layer.

This Homo sapiens (Human) protein is Putative CNGA1-overlapping antisense gene protein.